The chain runs to 550 residues: MAAKDVKFGNEARIKMLHGVNVLADAVKVTLGPKGRNVVLDKSFGPPSITKDGVSVAREIELEDKFENMGAQMVKEVASKANDAAGDGTTTATLLAQSIVNEGLKAVAAGMNPMDLKRGIDKAVIDAVDELKKLSVPCADSKAITQVGTISANADEKVGSLIAEAMEKVGNDGVITVEEGTGLQNELEVVKGMQFDRGYLSPYFINQPETGLVELENPYILMVDKKISNIRELLPILEAVAKSSKPLLIISEDLEGEALATLVVNSMRGIVKVAAVKAPGFGDRRKAMLQDISILTGGSVISEELAMDLEKSSLEDLGQAKRVVINKDTTTIIDGNGNKEAIKSRISQIRQEINEATSDYDKEKLNERLAKLSGGVAVLKVGAATEVEMKEKKARVEDALHATRAAVEEGVVPGGGVALVRVAEKISRINGQNEDQNVGIRVALRAMEAPLRQIVANSGEEPSVVTNNVKDGHGNYGYNAATDEYGDMISFGILDPTKVTRSALQYAASVAGLMITTECMVTDLPKDEKSSSELNSAPGNGMGGGMGGMM.

ATP contacts are provided by residues 30 to 33 (TLGP), K51, 87 to 91 (DGTTT), G415, 479 to 481 (NAA), and D495. Positions 525–550 (PKDEKSSSELNSAPGNGMGGGMGGMM) are disordered. The segment covering 540 to 550 (NGMGGGMGGMM) has biased composition (gly residues).

Belongs to the chaperonin (HSP60) family. Forms a cylinder of 14 subunits composed of two heptameric rings stacked back-to-back. Interacts with the co-chaperonin GroES.

The protein localises to the cytoplasm. It carries out the reaction ATP + H2O + a folded polypeptide = ADP + phosphate + an unfolded polypeptide.. Together with its co-chaperonin GroES, plays an essential role in assisting protein folding. The GroEL-GroES system forms a nano-cage that allows encapsulation of the non-native substrate proteins and provides a physical environment optimized to promote and accelerate protein folding. The sequence is that of Chaperonin GroEL from Buchnera aphidicola subsp. Cinara cedri (strain Cc).